Consider the following 239-residue polypeptide: LexA repressor (239 aa).

Positions 27–47 (FDEMKDALDLASKSGIHRLIT) form a DNA-binding region, H-T-H motif. Catalysis depends on for autocatalytic cleavage activity residues Ser159 and Lys197.

Belongs to the peptidase S24 family. In terms of assembly, homodimer.

It carries out the reaction Hydrolysis of Ala-|-Gly bond in repressor LexA.. In terms of biological role, represses a number of genes involved in the response to DNA damage (SOS response), including recA and lexA. In the presence of single-stranded DNA, RecA interacts with LexA causing an autocatalytic cleavage which disrupts the DNA-binding part of LexA, leading to derepression of the SOS regulon and eventually DNA repair. This is LexA repressor from Rhizobium radiobacter (Agrobacterium tumefaciens).